A 200-amino-acid polypeptide reads, in one-letter code: UPF0316 protein SACOL1973 (200 aa).

Transmembrane regions (helical) follow at residues Pro-8–Met-28, Ile-40–Met-60, and Ile-66–Ile-86.

This sequence belongs to the UPF0316 family.

Its subcellular location is the cell membrane. The sequence is that of UPF0316 protein SACOL1973 from Staphylococcus aureus (strain COL).